The chain runs to 160 residues: MKLEVLPLDQKTFSAYGDVIETQERDFFHINNGLVERYHDLAKVEVLEQDRTLISINRAQPAAMPIVVHELERHPLGTQAFVPMNGEAFVVIVALGDDKPDLSTLRAFISNGRQGVNYHRNVWHHPLFAWQTVTDFLTVDRGGSDNCDVESIPTHELCFT.

Belongs to the ureidoglycolate lyase family. In terms of assembly, homodimer. Ni(2+) is required as a cofactor.

It carries out the reaction (S)-ureidoglycolate = urea + glyoxylate. It participates in nitrogen metabolism; (S)-allantoin degradation. Functionally, catalyzes the catabolism of the allantoin degradation intermediate (S)-ureidoglycolate, generating urea and glyoxylate. Involved in the utilization of allantoin as nitrogen source. This chain is Ureidoglycolate lyase, found in Salmonella gallinarum (strain 287/91 / NCTC 13346).